A 349-amino-acid chain; its full sequence is Hyaluronidase Tab y 2.0101 (349 aa).

The first 25 residues, 1–25, serve as a signal peptide directing secretion; it reads MKLHQGLVCLSVLILLPTCILGDRK. Intrachain disulfides connect cysteine 37-cysteine 328 and cysteine 205-cysteine 216. Residues asparagine 41, asparagine 81, asparagine 99, and asparagine 119 are each glycosylated (N-linked (GlcNAc...) asparagine). Glutamate 129 serves as the catalytic Proton donor. Asparagine 147 is a glycosylation site (N-linked (GlcNAc...) asparagine). N-linked (GlcNAc...) asparagine glycans are attached at residues asparagine 251 and asparagine 297.

This sequence belongs to the glycosyl hydrolase 56 family. Expressed in salivary glands.

It is found in the secreted. It carries out the reaction Random hydrolysis of (1-&gt;4)-linkages between N-acetyl-beta-D-glucosamine and D-glucuronate residues in hyaluronate.. Hydrolyzes high molecular weight hyaluronic acid to produce small oligosaccharides. This chain is Hyaluronidase Tab y 2.0101, found in Tabanus yao (Horsefly).